We begin with the raw amino-acid sequence, 210 residues long: uncharacterized protein (210 aa).

This sequence to E.coli YkgK.

This is an uncharacterized protein from Escherichia coli (strain K12).